We begin with the raw amino-acid sequence, 510 residues long: Calmodulin-binding receptor-like cytoplasmic kinase 3 (510 aa).

Positions 1–30 (MGGDDLSFTRLVITALFGLLMLLQIKETSA) are cleaved as a signal peptide. Residues 166-178 (VSSFEMSPSSEKI) show a composition bias toward polar residues. Positions 166 to 209 (VSSFEMSPSSEKIPQSPFRAPPSPSRVPQSPSRYAMSPRPSRLG) are disordered. T214 carries the post-translational modification Phosphothreonine. The Protein kinase domain occupies 225 to 499 (FADSHQIGEG…MEAVGKQLWA (275 aa)). Residues 231–239 (IGEGGFGVV) and K253 contribute to the ATP site. The tract at residues 240–265 (FKGVLDDGQVVAIKRAKKEHFENLRT) is caM-binding. D350 (proton acceptor) is an active-site residue. S354 is modified (phosphoserine). Phosphothreonine is present on residues T386 and T391. Y399 is subject to Phosphotyrosine.

It belongs to the protein kinase superfamily. Ser/Thr protein kinase family. In terms of assembly, interacts with calmodulin (CaM) in a Ca(2+)-dependent manner.

It localises to the cytoplasm. The catalysed reaction is L-seryl-[protein] + ATP = O-phospho-L-seryl-[protein] + ADP + H(+). It catalyses the reaction L-threonyl-[protein] + ATP = O-phospho-L-threonyl-[protein] + ADP + H(+). This Arabidopsis thaliana (Mouse-ear cress) protein is Calmodulin-binding receptor-like cytoplasmic kinase 3 (CRCK3).